The sequence spans 400 residues: Phosphoglycerate kinase (400 aa).

Substrate-binding positions include 24–26 (DFN), Arg40, 63–66 (HFGR), Arg121, and Arg154. ATP contacts are provided by residues Lys205, Gly296, Glu327, and 356-359 (GGDS).

In terms of assembly, monomer.

It localises to the cytoplasm. The enzyme catalyses (2R)-3-phosphoglycerate + ATP = (2R)-3-phospho-glyceroyl phosphate + ADP. It participates in carbohydrate degradation; glycolysis; pyruvate from D-glyceraldehyde 3-phosphate: step 2/5. The sequence is that of Phosphoglycerate kinase from Nostoc sp. (strain PCC 7120 / SAG 25.82 / UTEX 2576).